Consider the following 365-residue polypeptide: 3-galactosyl-N-acetylglucosaminide 4-alpha-L-fucosyltransferase FUT3 (365 aa).

Residues 1-15 (MYPPGCAKVKCSWHH) are Cytoplasmic-facing. A helical; Signal-anchor for type II membrane protein membrane pass occupies residues 16 to 34 (CLPGLLLQLLLALCFFSYL). Topologically, residues 35 to 365 (RMSQEKPKPK…TVPSIASWFQ (331 aa)) are lumenal. Residues Asn100, Asn158, and Asn189 are each glycosylated (N-linked (GlcNAc...) asparagine).

It belongs to the glycosyltransferase 10 family. In terms of processing, glycosylated. In terms of tissue distribution, liver, kidney, lung and brain.

It is found in the golgi apparatus. Its subcellular location is the golgi stack membrane. The enzyme catalyses a beta-D-galactosyl-(1-&gt;3)-N-acetyl-beta-D-glucosaminyl derivative + GDP-beta-L-fucose = a beta-D-galactosyl-(1-&gt;3)-[alpha-L-fucosyl-(1-&gt;4)]-N-acetyl-beta-D-glucosaminyl derivative + GDP + H(+). It catalyses the reaction an N-acetyl-alpha-neuraminyl-(2-&gt;3)-beta-D-galactosyl-(1-&gt;4)-N-acetyl-beta-D-glucosaminyl derivative + GDP-beta-L-fucose = an alpha-Neu5Ac-(2-&gt;3)-beta-D-Gal-(1-&gt;4)-[alpha-L-Fuc-(1-&gt;3)]-beta-D-GlcNAc derivative + GDP + H(+). The catalysed reaction is a beta-D-galactosyl-(1-&gt;4)-N-acetyl-beta-D-glucosaminyl derivative + GDP-beta-L-fucose = a beta-D-galactosyl-(1-&gt;4)-[alpha-L-fucosyl-(1-&gt;3)]-N-acetyl-beta-D-glucosaminyl derivative + GDP + H(+). It carries out the reaction an alpha-Neu5Ac-(2-&gt;3)-beta-D-Gal-(1-&gt;4)-beta-D-GlcNAc-(1-&gt;3)-beta-D-Gal-(1-&gt;4)-[alpha-L-Fuc-(1-&gt;3)]-beta-D-GlcNAc derivative + GDP-beta-L-fucose = an alpha-Neu5Ac-(2-&gt;3)-beta-D-Gal-(1-&gt;4)-[alpha-L-Fuc-(1-&gt;3)]-beta-D-GlcNAc-(1-&gt;3)-beta-D-Gal-(1-&gt;4)-[alpha-L-Fuc-(1-&gt;3)]-beta-D-GlcNAc derivative + GDP + H(+). The enzyme catalyses Lc4Cer + GDP-beta-L-fucose = a lactoside III(4)-a-Fuc-Lc4Cer + GDP + H(+). It catalyses the reaction a beta-D-Gal-(1-&gt;3)-beta-D-GlcNAc-(1-&gt;3)-beta-D-Gal-(1-&gt;4)-beta-D-Glc-(1&lt;-&gt;1')-Cer(d18:1(4E)) + GDP-beta-L-fucose = a III(4)-a-Fuc-Lc4Cer(d18:1(4E)) + GDP + H(+). The catalysed reaction is N-acetyl-alpha-neuraminosyl-(2-&gt;3)-beta-D-galactosyl-(1-&gt;3)-[N-acetyl-alpha-neuraminosyl-(2-&gt;6)]-N-acetyl-beta-D-glucosaminyl-(1-&gt;3)-beta-D-galactosyl-(1-&gt;4)-beta-D-glucosyl-(1&lt;-&gt;1')-N-acyl-sphing-4-enine + GDP-beta-L-fucose = N-acetyl-alpha-neuraminosyl-(2-&gt;3)-beta-D-galactosyl-(1-&gt;3)-alpha-L-fucosyl-(1-&gt;4)-[N-acetyl-alpha-neuraminosyl-(2-&gt;6)-N-acetyl-beta-D-glucosaminyl-(1-&gt;3)]-beta-D-galactosyl-(1-&gt;4)-beta-D-glucosyl-(1&lt;-&gt;1')-N-acyl-sphing-4-enine + GDP + H(+). It carries out the reaction N-acetyl-alpha-neuraminosyl-(2-&gt;3)-beta-D-galactosyl-(1-&gt;3)-N-acetyl-beta-D-glucosaminyl-(1-&gt;3)-beta-D-galactosyl-(1-&gt;4)-beta-D-glucosyl-(1&lt;-&gt;1')-N-acyl-sphing-4-enine + GDP-beta-L-fucose = N-acetyl-alpha-neuraminosyl-(2-&gt;3)-beta-D-galactosyl-(1-&gt;3)-alpha-L-fucosyl-(1-&gt;4)-[N-acetyl-beta-D-glucosaminyl-(1-&gt;3)]-beta-D-galactosyl-(1-&gt;4)-beta-D-glucosyl-(1&lt;-&gt;1')-N-acyl-sphing-4-enine + GDP + H(+). The enzyme catalyses beta-D-galactosyl-(1-&gt;3)-N-acetyl-D-glucosamine + GDP-beta-L-fucose = beta-D-galactosyl-(1-&gt;3)-[alpha-L-fucosyl-(1-&gt;4)]-N-acetyl-D-glucosamine + GDP + H(+). It catalyses the reaction alpha-L-Fuc-(1-&gt;2)-beta-D-Gal-(1-&gt;3)-D-GlcNAc + GDP-beta-L-fucose = alpha-L-Fuc-(1-&gt;2)-beta-D-Gal-(1-&gt;3)-[alpha-L-Fuc-(1-&gt;4)]-D-GlcNAc + GDP + H(+). The catalysed reaction is alpha-L-Fuc-(1-&gt;2)-beta-D-Gal-(1-&gt;4)-D-GlcNAc + GDP-beta-L-fucose = alpha-L-Fuc-(1-&gt;2)-beta-D-Gal-(1-&gt;4)-[alpha-L-Fuc-(1-&gt;3)]-D-GlcNAc + GDP + H(+). It carries out the reaction beta-D-galactosyl-(1-&gt;4)-N-acetyl-D-glucosamine + GDP-beta-L-fucose = beta-D-galactosyl-(1-&gt;4)-[alpha-L-fucosyl-(1-&gt;3)]-N-acetyl-D-glucosamine + GDP + H(+). The enzyme catalyses lactose + GDP-beta-L-fucose = beta-D-galactosyl-(1-&gt;4)-[alpha-L-fucosyl-(1-&gt;3)]-D-glucose + GDP + H(+). It catalyses the reaction an alpha-Neu5Ac-(2-&gt;3)-beta-D-Gal-(1-&gt;3)-D-GlcNAc derivative + GDP-beta-L-fucose = an alpha-Neu5Ac-(2-&gt;3)-beta-D-Gal-(1-&gt;3)-[alpha-L-Fuc-(1-&gt;4)]-beta-D-GlcNAc derivative + GDP + H(+). It participates in protein modification; protein glycosylation. Catalyzes the transfer of L-fucose, from a guanosine diphosphate-beta-L-fucose, to both the subterminal N-acetyl glucosamine (GlcNAc) of type 1 chain (beta-D-Gal-(1-&gt;3)-beta-D-GlcNAc) glycolipids and oligosaccharides via an alpha(1,4) linkage, and the subterminal glucose (Glc) or GlcNAc of type 2 chain (beta-D-Gal-(1-&gt;4)-beta-D-GlcNAc) oligosaccharides via an alpha(1,3) linkage, independently of the presence of terminal alpha-L-fucosyl-(1,2) moieties on the terminal galactose of these acceptors and participates in the blood groups Lewis determination and expression of Lewis a (Le(a)), lewis b (Le(b)), Lewis x/SSEA-1 (Le(x)) and lewis y (Le(y)) antigens. Also catalyzes the transfer of L-fucose to subterminal GlcNAc of sialyl- and disialyl-lactotetraosylceramide to produce sialyl Lewis a (sLe(a)) and disialyl Lewis a via an alpha(1,4) linkage and therefore may regulate cell surface sialyl Lewis a expression and consequently regulates adhesive properties to E-selectin, cell proliferation and migration. Catalyzes the transfer of an L-fucose to 3'-sialyl-N-acetyllactosamine by an alpha(1,3) linkage, which allows the formation of sialyl-Lewis x structure and therefore may regulate the sialyl-Lewis x surface antigen expression and consequently adhesive properties to E-selectin. Prefers type 1 chain over type 2 acceptors. Type 1 tetrasaccharide is a better acceptor than type 1 disaccharide suggesting that a beta anomeric configuration of GlcNAc in the substrate is preferred. Lewis-positive (Le(+)) individuals have an active enzyme while Lewis-negative (Le(-)) individuals have an inactive enzyme. This chain is 3-galactosyl-N-acetylglucosaminide 4-alpha-L-fucosyltransferase FUT3, found in Bos taurus (Bovine).